A 385-amino-acid polypeptide reads, in one-letter code: Probable caffeine synthase MTL1 (385 aa).

S-adenosyl-L-homocysteine contacts are provided by Tyr-18, Cys-62, Asn-67, Asp-101, Leu-102, Ser-140, and Phe-141. 3 residues coordinate caffeine: Tyr-158, Gln-161, and Phe-162. Residue Asn-179 participates in Mg(2+) binding. Residue Thr-238 coordinates caffeine. Positions 261, 263, and 264 each coordinate Mg(2+). Tyr-369 provides a ligand contact to caffeine.

This sequence belongs to the methyltransferase superfamily. Type-7 methyltransferase family. The cofactor is Mg(2+).

It functions in the pathway alkaloid biosynthesis. Its function is as follows. May be involved in the biosynthesis of caffeine. The polypeptide is Probable caffeine synthase MTL1 (Coffea canephora (Robusta coffee)).